A 196-amino-acid chain; its full sequence is Ribose 1,5-bisphosphate phosphokinase PhnN (196 aa).

Belongs to the ribose 1,5-bisphosphokinase family.

The enzyme catalyses alpha-D-ribose 1,5-bisphosphate + ATP = 5-phospho-alpha-D-ribose 1-diphosphate + ADP. It participates in metabolic intermediate biosynthesis; 5-phospho-alpha-D-ribose 1-diphosphate biosynthesis; 5-phospho-alpha-D-ribose 1-diphosphate from D-ribose 5-phosphate (route II): step 3/3. Catalyzes the phosphorylation of ribose 1,5-bisphosphate to 5-phospho-D-ribosyl alpha-1-diphosphate (PRPP). The polypeptide is Ribose 1,5-bisphosphate phosphokinase PhnN (Psychromonas ingrahamii (strain DSM 17664 / CCUG 51855 / 37)).